The sequence spans 406 residues: Probable tRNA sulfurtransferase (406 aa).

A THUMP domain is found at 60–166; it reads DQVMNRLKLV…LNGIFLSSET (107 aa). ATP contacts are provided by residues 184–185, 209–210, Arg-266, Gly-288, and Gln-297; these read MM and HF.

The protein belongs to the ThiI family.

It localises to the cytoplasm. The catalysed reaction is [ThiI sulfur-carrier protein]-S-sulfanyl-L-cysteine + a uridine in tRNA + 2 reduced [2Fe-2S]-[ferredoxin] + ATP + H(+) = [ThiI sulfur-carrier protein]-L-cysteine + a 4-thiouridine in tRNA + 2 oxidized [2Fe-2S]-[ferredoxin] + AMP + diphosphate. It carries out the reaction [ThiS sulfur-carrier protein]-C-terminal Gly-Gly-AMP + S-sulfanyl-L-cysteinyl-[cysteine desulfurase] + AH2 = [ThiS sulfur-carrier protein]-C-terminal-Gly-aminoethanethioate + L-cysteinyl-[cysteine desulfurase] + A + AMP + 2 H(+). It participates in cofactor biosynthesis; thiamine diphosphate biosynthesis. In terms of biological role, catalyzes the ATP-dependent transfer of a sulfur to tRNA to produce 4-thiouridine in position 8 of tRNAs, which functions as a near-UV photosensor. Also catalyzes the transfer of sulfur to the sulfur carrier protein ThiS, forming ThiS-thiocarboxylate. This is a step in the synthesis of thiazole, in the thiamine biosynthesis pathway. The sulfur is donated as persulfide by IscS. In Limosilactobacillus reuteri subsp. reuteri (strain JCM 1112) (Lactobacillus reuteri), this protein is Probable tRNA sulfurtransferase.